Here is a 212-residue protein sequence, read N- to C-terminus: Leucine efflux protein (212 aa).

6 helical membrane passes run 12–32 (TYLVGAIFIVLVPGPNTLFVL), 49–69 (GVFIGDAVLMFLAWAGVATLI), 71–91 (TTPILFNIVRYLGAFYLLYLG), 122–142 (ILSLTNPKAILFYVSFFVQFI), 153–173 (FFILAATLELVSFCYLSFLII), and 188–208 (LAKVGNSLIGLMFVGFAARLA).

The protein belongs to the Rht family.

It is found in the cell inner membrane. The enzyme catalyses L-leucine(in) + H(+)(out) = L-leucine(out) + H(+)(in). Its activity is regulated as follows. Leucine export is inhibited by the proton ionophore carbonyl cyanide m-chlorophenylhydrazone (CCCP). In terms of biological role, exporter of leucine. Can also transport its natural analog L-alpha-amino-n-butyric acid and some other structurally unrelated amino acids. Leucine excretion is probably driven by proton motive force. This Escherichia coli (strain K12) protein is Leucine efflux protein.